Consider the following 98-residue polypeptide: Plastocyanin (98 aa).

The Plastocyanin-like domain maps to 1 to 98 (AQIVKLGGDD…AGMKMTITVQ (98 aa)). Positions 38, 83, 86, and 91 each coordinate Cu cation.

Belongs to the plastocyanin family. Requires Cu(2+) as cofactor.

The protein resides in the plastid. The protein localises to the chloroplast thylakoid membrane. Participates in electron transfer between P700 and the cytochrome b6-f complex in photosystem I. The protein is Plastocyanin (PETE) of Ulva arasakii (Sea lettuce).